Reading from the N-terminus, the 180-residue chain is UPF0149 protein XAC3406 (180 aa).

Belongs to the UPF0149 family.

The sequence is that of UPF0149 protein XAC3406 from Xanthomonas axonopodis pv. citri (strain 306).